We begin with the raw amino-acid sequence, 132 residues long: Agouti-signaling protein (132 aa).

An N-terminal signal peptide occupies residues 1–22 (MDVTRLLLATLLVFLCFFTAYS). Asn39 carries an N-linked (GlcNAc...) asparagine glycan. Residues 61–87 (QISRKEAEKKRSSKKEASMKKVARPRT) form a disordered region. Positions 63 to 79 (SRKEAEKKRSSKKEASM) are enriched in basic and acidic residues. Disulfide bonds link Cys93–Cys108, Cys100–Cys114, Cys107–Cys125, Cys111–Cys132, and Cys116–Cys123. The Agouti domain occupies 93 to 132 (CVTTRDSCKPPAPACCDPCASCQCRFFRSACSCRVLSLNC).

Its subcellular location is the secreted. Functionally, involved in the regulation of melanogenesis. The binding of ASP to MC1R precludes alpha-MSH initiated signaling and thus blocks production of cAMP, leading to a down-regulation of eumelanogenesis (brown/black pigment) and thus increasing synthesis of pheomelanin (yellow/red pigment). This is Agouti-signaling protein (ASIP) from Macaca silenus (Lion-tailed macaque).